The following is a 338-amino-acid chain: Methionine synthase (338 aa).

Zn(2+) contacts are provided by His-210, Cys-212, Glu-234, and Cys-294.

This sequence belongs to the archaeal MetE family. It depends on Zn(2+) as a cofactor.

Its pathway is amino-acid biosynthesis; L-methionine biosynthesis via de novo pathway. Functionally, catalyzes the transfer of a methyl group to L-homocysteine resulting in methionine formation. The physiological methyl donor is unknown. The sequence is that of Methionine synthase from Pyrococcus furiosus (strain ATCC 43587 / DSM 3638 / JCM 8422 / Vc1).